The chain runs to 201 residues: Ras-related protein Ral-a (201 aa).

18-25 lines the GTP pocket; that stretch reads GSGGVGKS. The Effector region signature appears at 40–48; it reads YEPTKADSY. GTP-binding positions include 65 to 69 and 124 to 127; these read DTAGQ and NKCD. Cys-198 bears the Cysteine methyl ester mark. Cys-198 is lipidated: S-geranylgeranyl cysteine. Residues 199–201 constitute a propeptide, removed in mature form; sequence TLL.

Belongs to the small GTPase superfamily. Ras family.

It localises to the cell membrane. The protein localises to the cleavage furrow. It is found in the midbody. The protein resides in the midbody ring. It catalyses the reaction GTP + H2O = GDP + phosphate + H(+). The protein is Ras-related protein Ral-a (Rala) of Drosophila melanogaster (Fruit fly).